The primary structure comprises 462 residues: Bifunctional dihydrofolate reductase-thymidylate synthase (462 aa).

In terms of domain architecture, DHFR spans 6–165 (TFSMVLAMTL…INYDYQHLIN (160 aa)). Val-10 provides a ligand contact to substrate. Residues Ala-12 and 18–24 (GIGYQNR) each bind NADP(+). Position 32 (Asp-32) interacts with substrate. Residues 49-51 (RKT) and 68-71 (ISKN) each bind NADP(+). Residue Ile-101 coordinates substrate. NADP(+) is bound at residue 102-109 (GGKRIFEE). Thr-122 contacts substrate. Positions 180 to 462 (ENQYLDMITK…HDKIEMKMAV (283 aa)) are thymidylate synthase. Residue Arg-200 participates in dUMP binding. The active site involves Cys-345. Residues His-346, 364–368 (QRSCD), Asn-376, and 406–408 (HIY) contribute to the dUMP site.

The protein in the N-terminal section; belongs to the dihydrofolate reductase family. This sequence in the C-terminal section; belongs to the thymidylate synthase family.

The enzyme catalyses (6S)-5,6,7,8-tetrahydrofolate + NADP(+) = 7,8-dihydrofolate + NADPH + H(+). It carries out the reaction dUMP + (6R)-5,10-methylene-5,6,7,8-tetrahydrofolate = 7,8-dihydrofolate + dTMP. It functions in the pathway cofactor biosynthesis; tetrahydrofolate biosynthesis; 5,6,7,8-tetrahydrofolate from 7,8-dihydrofolate: step 1/1. In terms of biological role, bifunctional enzyme. Involved in de novo dTMP biosynthesis. Key enzyme in folate metabolism. Catalyzes an essential reaction for de novo glycine and purine synthesis, DNA precursor synthesis, and for the conversion of dUMP to dTMP. The sequence is that of Bifunctional dihydrofolate reductase-thymidylate synthase from Paramecium tetraurelia.